Consider the following 459-residue polypeptide: Cysteine--tRNA ligase (459 aa).

Zn(2+) is bound at residue cysteine 28. Positions 30–40 (VTIYDLCHIGH) match the 'HIGH' region motif. Zn(2+)-binding residues include cysteine 209, histidine 234, and glutamate 238. The 'KMSKS' region motif lies at 266–270 (KMSKS). Lysine 269 contacts ATP.

Belongs to the class-I aminoacyl-tRNA synthetase family. In terms of assembly, monomer. The cofactor is Zn(2+).

Its subcellular location is the cytoplasm. The enzyme catalyses tRNA(Cys) + L-cysteine + ATP = L-cysteinyl-tRNA(Cys) + AMP + diphosphate. The polypeptide is Cysteine--tRNA ligase (Shewanella pealeana (strain ATCC 700345 / ANG-SQ1)).